A 505-amino-acid polypeptide reads, in one-letter code: MASIDFRNKINWHRRYRSPQGVKTEHEILRIFESDRGRIINSPAIRRLQQKTQVFPLERNAAVRTRLTHSMEVQQVGRYIAKEILSRLKEQDRLEEYGLDALTGPFESIVEMACLMHDIGNPPFGHFGEAAINDWFRQRLHPEDAESQPLTHDRCVVSSLRLQEGEENLNDIRRKVRQDICHFEGNAQGIRLVHTLMRMNLTWAQVGGILKYTRPAWWRGPVPDSHRYLMKKPGYYLSEEKYIARLRKELQLAPYSRFPLTWIMEAADDISYCVADLEDAVEKRIFSVEQLYHHLYHAWCHHEKDSLFELVVGNAWEKSRANTLSRSTEDQFFMYLRVNTLNKLVPYAAQRFIDNLPQIFAGTFNQALLEDASGFSRLLELYKNVAVEHVFSHPDVEQLELQGYRVISGLLDIYQPLLSLSLNDFRELVEKERLKRFPIESRLFQKLSTRHRLAYVEVVSKLPTDSAEYPVLEYYYRCRLIQDYISGMTDLYAWDEYRRLMAVEQ.

Positions 66-273 (RLTHSMEVQQ…MEAADDISYC (208 aa)) constitute an HD domain.

This sequence belongs to the dGTPase family. Type 1 subfamily. In terms of assembly, homotetramer. The cofactor is Mg(2+).

The enzyme catalyses dGTP + H2O = 2'-deoxyguanosine + triphosphate + H(+). DGTPase preferentially hydrolyzes dGTP over the other canonical NTPs. The protein is Deoxyguanosinetriphosphate triphosphohydrolase of Salmonella typhimurium (strain LT2 / SGSC1412 / ATCC 700720).